We begin with the raw amino-acid sequence, 248 residues long: ATP synthase subunit a (248 aa).

5 helical membrane-spanning segments follow: residues 31 to 51 (GQVLIASWIAIALILTVVILG), 90 to 110 (VPYVGTLFLFIFVSNWMGNLF), 129 to 149 (INTTAGLALLTSIMYFVAGIS), 195 to 215 (VIAVLVLLVPLFIPVPVMVLF), and 216 to 236 (LFTGAIQALIFSTLSAAYIGE).

This sequence belongs to the ATPase A chain family. In terms of assembly, F-type ATPases have 2 components, CF(1) - the catalytic core - and CF(0) - the membrane proton channel. CF(1) has five subunits: alpha(3), beta(3), gamma(1), delta(1), epsilon(1). CF(0) has four main subunits: a, b, b' and c.

The protein localises to the cellular thylakoid membrane. Key component of the proton channel; it plays a direct role in the translocation of protons across the membrane. The sequence is that of ATP synthase subunit a from Synechococcus sp. (strain JA-2-3B'a(2-13)) (Cyanobacteria bacterium Yellowstone B-Prime).